The following is a 215-amino-acid chain: 3-demethoxyubiquinol 3-hydroxylase (215 aa).

Residues E64, E94, H97, E146, E178, and H181 each contribute to the Fe cation site.

It belongs to the COQ7 family. Requires Fe cation as cofactor.

It localises to the cell membrane. It catalyses the reaction a 5-methoxy-2-methyl-3-(all-trans-polyprenyl)benzene-1,4-diol + AH2 + O2 = a 3-demethylubiquinol + A + H2O. Its pathway is cofactor biosynthesis; ubiquinone biosynthesis. Functionally, catalyzes the hydroxylation of 2-nonaprenyl-3-methyl-6-methoxy-1,4-benzoquinol during ubiquinone biosynthesis. The chain is 3-demethoxyubiquinol 3-hydroxylase from Pseudomonas putida (strain W619).